Consider the following 244-residue polypeptide: Transcriptional activator protein CarR (244 aa).

The 66-residue stretch at 162–227 (DNSRNALLSP…HAITKALELN (66 aa)) folds into the HTH luxR-type domain. Residues 186-205 (YKEVSRILGISEVTVKFHIN) constitute a DNA-binding region (H-T-H motif).

It belongs to the autoinducer-regulated transcriptional regulatory protein family.

In terms of biological role, functions as an OHLL responsive transcriptional regulator which acts in the control of the biosynthesis of carbapenem antibiotics. The polypeptide is Transcriptional activator protein CarR (carR) (Pectobacterium carotovorum subsp. carotovorum (Erwinia carotovora subsp. carotovora)).